The primary structure comprises 207 residues: ATP synthase subunit b 2 (207 aa).

A helical transmembrane segment spans residues 53-72 (TYASQLLWLVITFSVFYLLM).

The protein belongs to the ATPase B chain family. F-type ATPases have 2 components, F(1) - the catalytic core - and F(0) - the membrane proton channel. F(1) has five subunits: alpha(3), beta(3), gamma(1), delta(1), epsilon(1). F(0) has three main subunits: a(1), b(2) and c(10-14). The alpha and beta chains form an alternating ring which encloses part of the gamma chain. F(1) is attached to F(0) by a central stalk formed by the gamma and epsilon chains, while a peripheral stalk is formed by the delta and b chains.

It localises to the cell inner membrane. Its function is as follows. F(1)F(0) ATP synthase produces ATP from ADP in the presence of a proton or sodium gradient. F-type ATPases consist of two structural domains, F(1) containing the extramembraneous catalytic core and F(0) containing the membrane proton channel, linked together by a central stalk and a peripheral stalk. During catalysis, ATP synthesis in the catalytic domain of F(1) is coupled via a rotary mechanism of the central stalk subunits to proton translocation. Functionally, component of the F(0) channel, it forms part of the peripheral stalk, linking F(1) to F(0). The b'-subunit is a diverged and duplicated form of b found in plants and photosynthetic bacteria. The chain is ATP synthase subunit b 2 (atpF2) from Rhizobium leguminosarum bv. trifolii (strain WSM2304).